The sequence spans 439 residues: ATP-dependent protease ATPase subunit HslU (439 aa).

Residues Ile-17, 59-64 (GVGKTE), Asp-251, Glu-317, and Arg-389 each bind ATP.

Belongs to the ClpX chaperone family. HslU subfamily. A double ring-shaped homohexamer of HslV is capped on each side by a ring-shaped HslU homohexamer. The assembly of the HslU/HslV complex is dependent on binding of ATP.

It is found in the cytoplasm. In terms of biological role, ATPase subunit of a proteasome-like degradation complex; this subunit has chaperone activity. The binding of ATP and its subsequent hydrolysis by HslU are essential for unfolding of protein substrates subsequently hydrolyzed by HslV. HslU recognizes the N-terminal part of its protein substrates and unfolds these before they are guided to HslV for hydrolysis. The protein is ATP-dependent protease ATPase subunit HslU of Campylobacter jejuni subsp. jejuni serotype O:23/36 (strain 81-176).